The following is a 131-amino-acid chain: Con-Ins Q1 (131 aa).

Residues 1–24 (MTTSSYFLLVALGLLLYLCQSSFG) form the signal peptide. 4 disulfide bridges follow: Cys29-Cys107, Cys41-Cys110, Cys53-Cys123, and Cys109-Cys114. Positions 59–92 (LQGGTDDARKKRGRASLLRKRRGFLSMLKARAKR) are cleaved as a propeptide — c peptide. A 4-carboxyglutamate; partial modification is found at Glu118. Ser130 is modified (serine amide).

This sequence belongs to the insulin family. As to quaternary structure, heterodimer of A and B chains; disulfide-linked. In terms of tissue distribution, expressed by the venom gland.

It is found in the secreted. This venom insulin facilitates prey capture by rapidly inducing hypoglycemic shock. Intraperitoneal injection of this peptide into zebrafish lowers blood glucose with the same potency than human insulin. In vivo, when applied to water, this peptide reduces overall locomotor activity of zebrafish larvae, observed as a significant decrease in the percentage of time spent swimming and movement frequency. The sequence is that of Con-Ins Q1 from Conus quercinus (Oak cone).